The sequence spans 421 residues: Testin (421 aa).

One can recognise a PET domain in the interval 92–199; sequence MILTNPVAAK…GDVKLPREMD (108 aa). Positions 133-164 are disordered; the sequence is EKQPVAGSEGAQYRKKQLAKQLPAHDQDPSKC. Over residues 155–164 the composition is skewed to basic and acidic residues; the sequence is PAHDQDPSKC. LIM zinc-binding domains follow at residues 234–297, 299–359, and 362–421; these read YSCY…CDSE, PRCA…NHAV, and QGCH…KMMS.

The protein belongs to the prickle / espinas / testin family. In terms of assembly, interacts via LIM domain 1 with ZYX. Interacts (via LIM domain 3) with ENAH and VASP. Interacts with ALKBH4, talin, actin, alpha-actinin, GRIP1 and PXN. Interacts (via LIM domain 2) with ACTL7A (via N-terminus). Heterodimer with ACTL7A; the heterodimer interacts with ENAH to form a heterotrimer.

Its subcellular location is the cytoplasm. The protein localises to the cell junction. It localises to the focal adhesion. Its function is as follows. Scaffold protein that may play a role in cell adhesion, cell spreading and in the reorganization of the actin cytoskeleton. Plays a role in the regulation of cell proliferation. May act as a tumor suppressor. This is Testin (TES) from Mustela putorius furo (European domestic ferret).